The chain runs to 337 residues: Probable arabinose 5-phosphate isomerase (337 aa).

The region spanning 58 to 201 (VIDLILACEG…AVSLITARNF (144 aa)) is the SIS domain. Substrate-binding positions include 92–93 (GT), histidine 99, histidine 105, 131–140 (KLIPSLKNFG), 165–167 (TVE), threonine 237, and aspartate 290. Histidine 99 contributes to the Zn(2+) binding site. The CBS 1 domain occupies 227–284 (MQTRLPTILPTTNFTDCLTVMNEGRMGVALVMENEQLKGIITDGDIRRALTANGAGTL). Residues 292–337 (MTSSPKTIHQDEFLSKAEDFMKAKKIHSLVVVNDENHVVGLVEFSS) enclose the CBS 2 domain.

It belongs to the SIS family. GutQ/KpsF subfamily.

The catalysed reaction is D-arabinose 5-phosphate = D-ribulose 5-phosphate. In terms of biological role, catalyzes the reversible aldol-ketol isomerization between D-ribulose 5-phosphate (Ru5P) and D-arabinose 5-phosphate (A5P). The sequence is that of Probable arabinose 5-phosphate isomerase from Haemophilus influenzae (strain ATCC 51907 / DSM 11121 / KW20 / Rd).